The sequence spans 33 residues: AGNKRPIWIMGAMVNAIKDIXDFVNLGANNIEK.

Glutamate 32 is a binding site for Mg(2+).

It belongs to the arthropod phospholipase D family. Class II subfamily. Mg(2+) is required as a cofactor. In terms of processing, contains 2 disulfide bonds. In terms of tissue distribution, expressed by the venom gland.

It is found in the secreted. It catalyses the reaction an N-(acyl)-sphingosylphosphocholine = an N-(acyl)-sphingosyl-1,3-cyclic phosphate + choline. The enzyme catalyses an N-(acyl)-sphingosylphosphoethanolamine = an N-(acyl)-sphingosyl-1,3-cyclic phosphate + ethanolamine. The catalysed reaction is a 1-acyl-sn-glycero-3-phosphocholine = a 1-acyl-sn-glycero-2,3-cyclic phosphate + choline. It carries out the reaction a 1-acyl-sn-glycero-3-phosphoethanolamine = a 1-acyl-sn-glycero-2,3-cyclic phosphate + ethanolamine. Functionally, dermonecrotic toxins cleave the phosphodiester linkage between the phosphate and headgroup of certain phospholipids (sphingolipid and lysolipid substrates), forming an alcohol (often choline) and a cyclic phosphate. This toxin acts on sphingomyelin (SM). It may also act on ceramide phosphoethanolamine (CPE), lysophosphatidylcholine (LPC) and lysophosphatidylethanolamine (LPE), but not on lysophosphatidylserine (LPS), and lysophosphatidylglycerol (LPG). It acts by transphosphatidylation, releasing exclusively cyclic phosphate products as second products. In vivo, intradermal injection induces dermonecrosis. Induces hemolysis, increased vascular permeability, edema, inflammatory response, and platelet aggregation. This chain is Dermonecrotic toxin LiSicTox-alphaI-1, found in Loxosceles intermedia (Brown spider).